The chain runs to 227 residues: Orotidine 5'-phosphate decarboxylase (227 aa).

Residues Asp8, Lys30, Asp59–Thr68, Thr118, Arg178, Gln187, Gly207, and Arg208 contribute to the substrate site. The active-site Proton donor is Lys61.

This sequence belongs to the OMP decarboxylase family. Type 1 subfamily. In terms of assembly, homodimer.

It carries out the reaction orotidine 5'-phosphate + H(+) = UMP + CO2. It functions in the pathway pyrimidine metabolism; UMP biosynthesis via de novo pathway; UMP from orotate: step 2/2. Its function is as follows. Catalyzes the decarboxylation of orotidine 5'-monophosphate (OMP) to uridine 5'-monophosphate (UMP). This Helicobacter pylori (strain P12) protein is Orotidine 5'-phosphate decarboxylase.